We begin with the raw amino-acid sequence, 798 residues long: Protocadherin beta-2 (798 aa).

An N-terminal signal peptide occupies residues 1–30 (MEAGEGKERVPKQRQVLIFFVLLGIAQASC). Residues 31-692 (QPRHYSVAEE…AQADLLTVYL (662 aa)) are Extracellular-facing. Cadherin domains are found at residues 37-135 (VAEE…SPVF), 136-244 (LDKE…VPEF), 249-349 (YEVQ…PPEL), 354-453 (LINQ…APAF), and 458-563 (YTLF…SPFV). The N-linked (GlcNAc...) asparagine glycan is linked to N171. Residue K299 is modified to N6-acetyllysine. 2 N-linked (GlcNAc...) asparagine glycosylation sites follow: N420 and N438. An N-linked (GlcNAc...) asparagine glycan is attached at N569. The region spanning 570-673 (GSAPCTELVP…LVDGFSQPYL (104 aa)) is the Cadherin 6 domain. A helical transmembrane segment spans residues 693-713 (VVALASVSSLFLFSVLLFVAV). The Cytoplasmic portion of the chain corresponds to 714–798 (RLCRRSRAAS…PSFRKSFEFT (85 aa)).

It is found in the cell membrane. Its function is as follows. Potential calcium-dependent cell-adhesion protein. May be involved in the establishment and maintenance of specific neuronal connections in the brain. The sequence is that of Protocadherin beta-2 (PCDHB2) from Homo sapiens (Human).